Here is a 112-residue protein sequence, read N- to C-terminus: UPF0060 membrane protein AAur_4166 (112 aa).

Helical transmembrane passes span 8–28 (ILFVLAAVAEIGGAWLIWQAV), 33–53 (AWWWAGLGVVALGIYGFFAAF), 62–82 (VLAAYGGVFIAGSLGWGMLMD), and 91–111 (VIGAAICIVGVGVIMFAPRPG).

It belongs to the UPF0060 family.

Its subcellular location is the cell membrane. The sequence is that of UPF0060 membrane protein AAur_4166 from Paenarthrobacter aurescens (strain TC1).